The primary structure comprises 259 residues: MSELKVAALRALKLMDLTTLNDNDTDAKVIQLCHDAKSPVGNTAAICIYPRFIPIAKKTLREQGTPEIRIATVTNFPHGNDDIEIAVAETKAAVAYGADEVDVVFPYRALIAGNEQVGFDLVKQCKAACGDKVLLKVIIETGELKQEALIKKASQICIEAGADFIKTSTGKVPVNATPEYARMMLEVIRDMGVAKTVGFKPAGGVRTAEDAQQYLAMADEILGGDWADSRHYRFGASSLLTNLLNTLEVTDQKADPAAY.

The active-site Proton donor/acceptor is the Asp-102. The Schiff-base intermediate with acetaldehyde role is filled by Lys-166. Lys-200 functions as the Proton donor/acceptor in the catalytic mechanism.

Belongs to the DeoC/FbaB aldolase family. DeoC type 2 subfamily.

It localises to the cytoplasm. It catalyses the reaction 2-deoxy-D-ribose 5-phosphate = D-glyceraldehyde 3-phosphate + acetaldehyde. The protein operates within carbohydrate degradation; 2-deoxy-D-ribose 1-phosphate degradation; D-glyceraldehyde 3-phosphate and acetaldehyde from 2-deoxy-alpha-D-ribose 1-phosphate: step 2/2. Functionally, catalyzes a reversible aldol reaction between acetaldehyde and D-glyceraldehyde 3-phosphate to generate 2-deoxy-D-ribose 5-phosphate. This chain is Deoxyribose-phosphate aldolase, found in Vibrio cholerae serotype O1 (strain ATCC 39315 / El Tor Inaba N16961).